A 511-amino-acid chain; its full sequence is Rab proteins geranylgeranyltransferase component A (511 aa).

This sequence belongs to the Rab GDI family.

It is found in the cytoplasm. Its subcellular location is the perinuclear region. It localises to the cytoskeleton. The protein localises to the spindle pole. In terms of biological role, binds unprenylated Rab proteins, presents it to the catalytic component B, and remains bound to it after the geranylgeranyl transfer reaction. The component A is thought to be regenerated by transferring its prenylated Rab to a protein acceptor. The sequence is that of Rab proteins geranylgeranyltransferase component A from Drosophila melanogaster (Fruit fly).